A 338-amino-acid chain; its full sequence is Phenylalanine--tRNA ligase alpha subunit (338 aa).

Glu253 contributes to the Mg(2+) binding site.

The protein belongs to the class-II aminoacyl-tRNA synthetase family. Phe-tRNA synthetase alpha subunit type 1 subfamily. Tetramer of two alpha and two beta subunits. Mg(2+) serves as cofactor.

Its subcellular location is the cytoplasm. It carries out the reaction tRNA(Phe) + L-phenylalanine + ATP = L-phenylalanyl-tRNA(Phe) + AMP + diphosphate + H(+). This chain is Phenylalanine--tRNA ligase alpha subunit, found in Trichlorobacter lovleyi (strain ATCC BAA-1151 / DSM 17278 / SZ) (Geobacter lovleyi).